We begin with the raw amino-acid sequence, 130 residues long: L-ectoine synthase (130 aa).

This sequence belongs to the ectoine synthase family.

It carries out the reaction (2S)-4-acetamido-2-aminobutanoate = L-ectoine + H2O. Its pathway is amine and polyamine biosynthesis; ectoine biosynthesis; L-ectoine from L-aspartate 4-semialdehyde: step 3/3. Catalyzes the circularization of gamma-N-acetyl-alpha,gamma-diaminobutyric acid (ADABA) to ectoine (1,4,5,6-tetrahydro-2-methyl-4-pyrimidine carboxylic acid), which is an excellent osmoprotectant. The sequence is that of L-ectoine synthase from Mycolicibacterium gilvum (strain PYR-GCK) (Mycobacterium gilvum (strain PYR-GCK)).